Here is a 118-residue protein sequence, read N- to C-terminus: Large ribosomal subunit protein bL19 (118 aa).

The protein belongs to the bacterial ribosomal protein bL19 family.

Its function is as follows. This protein is located at the 30S-50S ribosomal subunit interface and may play a role in the structure and function of the aminoacyl-tRNA binding site. This is Large ribosomal subunit protein bL19 from Levilactobacillus brevis (strain ATCC 367 / BCRC 12310 / CIP 105137 / JCM 1170 / LMG 11437 / NCIMB 947 / NCTC 947) (Lactobacillus brevis).